The sequence spans 120 residues: NAD(P)H-quinone oxidoreductase subunit 3, chloroplastic (120 aa).

The next 3 helical transmembrane spans lie at 9–29 (IFWA…FLSG), 62–82 (YYMF…LYPW), and 88–108 (VLGV…IVGL).

This sequence belongs to the complex I subunit 3 family. NDH is composed of at least 16 different subunits, 5 of which are encoded in the nucleus.

It is found in the plastid. It localises to the chloroplast thylakoid membrane. It catalyses the reaction a plastoquinone + NADH + (n+1) H(+)(in) = a plastoquinol + NAD(+) + n H(+)(out). The catalysed reaction is a plastoquinone + NADPH + (n+1) H(+)(in) = a plastoquinol + NADP(+) + n H(+)(out). NDH shuttles electrons from NAD(P)H:plastoquinone, via FMN and iron-sulfur (Fe-S) centers, to quinones in the photosynthetic chain and possibly in a chloroplast respiratory chain. The immediate electron acceptor for the enzyme in this species is believed to be plastoquinone. Couples the redox reaction to proton translocation, and thus conserves the redox energy in a proton gradient. The polypeptide is NAD(P)H-quinone oxidoreductase subunit 3, chloroplastic (Trachelium caeruleum (Blue throatwort)).